A 361-amino-acid polypeptide reads, in one-letter code: D-alanine--D-alanine ligase (361 aa).

The 198-residue stretch at 139 to 336 folds into the ATP-grasp domain; it reads KLLLKEKEIS…FSQIIDNMIN (198 aa). ATP is bound at residue 167 to 222; that stretch reads EKNLGYPMIVKPARLGSSIGVSKVVDRKNFEEAVKNVLLFDNKVLVEKWINAREIN. Residues Asp296, Glu307, and Asn309 each coordinate Mg(2+).

This sequence belongs to the D-alanine--D-alanine ligase family. Mg(2+) serves as cofactor. Requires Mn(2+) as cofactor.

It localises to the cytoplasm. It catalyses the reaction 2 D-alanine + ATP = D-alanyl-D-alanine + ADP + phosphate + H(+). It functions in the pathway cell wall biogenesis; peptidoglycan biosynthesis. In terms of biological role, cell wall formation. The protein is D-alanine--D-alanine ligase of Thermosipho melanesiensis (strain DSM 12029 / CIP 104789 / BI429).